Consider the following 238-residue polypeptide: Ribosomal RNA small subunit methyltransferase G (238 aa).

S-adenosyl-L-methionine-binding positions include glycine 78, 129–130, and arginine 148; that span reads AE.

It belongs to the methyltransferase superfamily. RNA methyltransferase RsmG family.

It is found in the cytoplasm. Specifically methylates the N7 position of a guanine in 16S rRNA. This Caldicellulosiruptor bescii (strain ATCC BAA-1888 / DSM 6725 / KCTC 15123 / Z-1320) (Anaerocellum thermophilum) protein is Ribosomal RNA small subunit methyltransferase G.